The primary structure comprises 338 residues: Nicotinate-nucleotide--dimethylbenzimidazole phosphoribosyltransferase (338 aa).

The active-site Proton acceptor is the Glu-305.

This sequence belongs to the CobT family.

It carries out the reaction 5,6-dimethylbenzimidazole + nicotinate beta-D-ribonucleotide = alpha-ribazole 5'-phosphate + nicotinate + H(+). It functions in the pathway nucleoside biosynthesis; alpha-ribazole biosynthesis; alpha-ribazole from 5,6-dimethylbenzimidazole: step 1/2. Its function is as follows. Catalyzes the synthesis of alpha-ribazole-5'-phosphate from nicotinate mononucleotide (NAMN) and 5,6-dimethylbenzimidazole (DMB). In Rhizobium johnstonii (strain DSM 114642 / LMG 32736 / 3841) (Rhizobium leguminosarum bv. viciae), this protein is Nicotinate-nucleotide--dimethylbenzimidazole phosphoribosyltransferase.